Reading from the N-terminus, the 158-residue chain is Kelch repeat protein B10 (158 aa).

2 Kelch repeats span residues T25–G76 and M77–N129.

Belongs to the poxviruses Kelch family.

This Vaccinia virus (strain Ankara) (VACV) protein is Kelch repeat protein B10.